The chain runs to 228 residues: Endolytic peptidoglycan transglycosylase RlpA (228 aa).

The first 23 residues, 1-23 (MIQRHKLIVLIFLLIFCLSGCNT), serve as a signal peptide directing secretion.

The protein belongs to the RlpA family.

Lytic transglycosylase with a strong preference for naked glycan strands that lack stem peptides. In Rickettsia felis (strain ATCC VR-1525 / URRWXCal2) (Rickettsia azadi), this protein is Endolytic peptidoglycan transglycosylase RlpA.